We begin with the raw amino-acid sequence, 72 residues long: Translation initiation factor IF-1 (72 aa).

In terms of domain architecture, S1-like spans 1 to 72; that stretch reads MPKDDSIEVE…TRGRITYRAK (72 aa).

This sequence belongs to the IF-1 family. As to quaternary structure, component of the 30S ribosomal translation pre-initiation complex which assembles on the 30S ribosome in the order IF-2 and IF-3, IF-1 and N-formylmethionyl-tRNA(fMet); mRNA recruitment can occur at any time during PIC assembly.

It is found in the cytoplasm. Its function is as follows. One of the essential components for the initiation of protein synthesis. Stabilizes the binding of IF-2 and IF-3 on the 30S subunit to which N-formylmethionyl-tRNA(fMet) subsequently binds. Helps modulate mRNA selection, yielding the 30S pre-initiation complex (PIC). Upon addition of the 50S ribosomal subunit IF-1, IF-2 and IF-3 are released leaving the mature 70S translation initiation complex. The polypeptide is Translation initiation factor IF-1 (Myxococcus xanthus (strain DK1622)).